The primary structure comprises 180 residues: Large ribosomal subunit protein uL6 (180 aa).

Belongs to the universal ribosomal protein uL6 family. As to quaternary structure, part of the 50S ribosomal subunit.

Its function is as follows. This protein binds to the 23S rRNA, and is important in its secondary structure. It is located near the subunit interface in the base of the L7/L12 stalk, and near the tRNA binding site of the peptidyltransferase center. In Thermoanaerobacter sp. (strain X514), this protein is Large ribosomal subunit protein uL6.